The chain runs to 41 residues: Pi-stichotoxin-Hcr5a (41 aa).

3 disulfides stabilise this stretch: cysteine 4–cysteine 37, cysteine 6–cysteine 30, and cysteine 20–cysteine 38.

The protein belongs to the sea anemone type 3 (BDS) potassium channel toxin family.

It localises to the secreted. It is found in the nematocyst. In terms of biological role, weakly inhibits human homomeric ASIC3 (IC(50)=5.5 uM). The chain is Pi-stichotoxin-Hcr5a from Radianthus crispa (Leathery sea anemone).